Reading from the N-terminus, the 60-residue chain is Large ribosomal subunit protein uL30 (60 aa).

This sequence belongs to the universal ribosomal protein uL30 family. In terms of assembly, part of the 50S ribosomal subunit.

In Lactobacillus johnsonii (strain CNCM I-12250 / La1 / NCC 533), this protein is Large ribosomal subunit protein uL30.